The chain runs to 169 residues: uncharacterized protein (169 aa).

Its subcellular location is the mitochondrion. This is an uncharacterized protein from Marchantia polymorpha (Common liverwort).